The primary structure comprises 489 residues: 3-octaprenyl-4-hydroxybenzoate carboxy-lyase (489 aa).

Asn172 contacts Mn(2+). Residues 175 to 177 (IYR), 189 to 191 (RWL), and 194 to 195 (RG) contribute to the prenylated FMN site. A Mn(2+)-binding site is contributed by Glu238. Asp287 (proton donor) is an active-site residue.

It belongs to the UbiD family. Homohexamer. Requires prenylated FMN as cofactor. Mn(2+) serves as cofactor.

It localises to the cell membrane. The catalysed reaction is a 4-hydroxy-3-(all-trans-polyprenyl)benzoate + H(+) = a 2-(all-trans-polyprenyl)phenol + CO2. It functions in the pathway cofactor biosynthesis; ubiquinone biosynthesis. Catalyzes the decarboxylation of 3-octaprenyl-4-hydroxy benzoate to 2-octaprenylphenol, an intermediate step in ubiquinone biosynthesis. This Psychromonas ingrahamii (strain DSM 17664 / CCUG 51855 / 37) protein is 3-octaprenyl-4-hydroxybenzoate carboxy-lyase.